The chain runs to 39 residues: MSKYIVLLVVSAIALLQFSMIECNTEDLGTIKQPLRFGK.

The signal sequence occupies residues 1–23; sequence MSKYIVLLVVSAIALLQFSMIEC. A Phenylalanine amide modification is found at F37.

The protein belongs to the FARP (FMRFamide related peptide) family. As to expression, expressed by the venom secretory cell of the spine. The spine is a cuticular structure containing a single large nucleated venom-secreting cell at its base. It is an independent unit capable of producing, storing and injecting venom. On the back of A.stimulea caterpillars, spines are grouped together by 50 to 100 to form scoli, of which there are eight.

The protein resides in the secreted. Functionally, strongly activates (at 30 uM) the human neuropeptide FF receptor 1 (NPFF1R), a G-protein coupled receptor, with an effect that is equipotent to the endogenous RFRP-1 ligand in activating NPFFR1. Is toxic when injected into Drosophila melanogaster. Also shows a moderate anthelmintic activity against the parasitic nematode H.contortus (drug susceptible Kirby isolate) (IC(50)=20.1 uM). This Acharia stimulea (Saddleback caterpillar moth) protein is U-limacoditoxin(13)-As54.